Reading from the N-terminus, the 372-residue chain is tRNA-specific 2-thiouridylase MnmA (372 aa).

ATP-binding positions include 6–13 (AMSGGVDS) and Leu32. Cys101 acts as the Nucleophile in catalysis. Cys101 and Cys193 are joined by a disulfide. ATP is bound at residue Gly125. The interval 143 to 145 (KDQ) is interaction with tRNA. Cys193 functions as the Cysteine persulfide intermediate in the catalytic mechanism.

Belongs to the MnmA/TRMU family.

It localises to the cytoplasm. It carries out the reaction S-sulfanyl-L-cysteinyl-[protein] + uridine(34) in tRNA + AH2 + ATP = 2-thiouridine(34) in tRNA + L-cysteinyl-[protein] + A + AMP + diphosphate + H(+). Functionally, catalyzes the 2-thiolation of uridine at the wobble position (U34) of tRNA, leading to the formation of s(2)U34. The sequence is that of tRNA-specific 2-thiouridylase MnmA from Corynebacterium kroppenstedtii (strain DSM 44385 / JCM 11950 / CIP 105744 / CCUG 35717).